Reading from the N-terminus, the 67-residue chain is Large ribosomal subunit protein eL24 (67 aa).

Cys-7, Cys-10, Cys-33, and Cys-37 together coordinate Zn(2+). Residues 7–37 (CSYCGKEFEPGTGKMYVRNDGRVYFFCSRKC) form a C4-type zinc finger.

The protein belongs to the eukaryotic ribosomal protein eL24 family. As to quaternary structure, part of the 50S ribosomal subunit. Forms a cluster with proteins L3 and L14. Requires Zn(2+) as cofactor.

Functionally, binds to the 23S rRNA. This Thermococcus sibiricus (strain DSM 12597 / MM 739) protein is Large ribosomal subunit protein eL24.